The chain runs to 193 residues: Ion-translocating oxidoreductase complex subunit A (193 aa).

6 helical membrane-spanning segments follow: residues 5 to 25 (ILLI…FLGL), 39 to 59 (IGMG…AYLV), 72 to 92 (LRTL…EMVI), 102 to 122 (LLGI…VALL), 134 to 154 (VIYG…FAAL), and 171 to 191 (SIAL…SGLV).

Belongs to the NqrDE/RnfAE family. In terms of assembly, the complex is composed of six subunits: RnfA, RnfB, RnfC, RnfD, RnfE and RnfG.

It localises to the cell inner membrane. Functionally, part of a membrane-bound complex that couples electron transfer with translocation of ions across the membrane. The protein is Ion-translocating oxidoreductase complex subunit A of Histophilus somni (strain 2336) (Haemophilus somnus).